A 194-amino-acid chain; its full sequence is dITP/XTP pyrophosphatase (194 aa).

7–12 (SGNVNK) lines the substrate pocket. Residues Glu-38 and Asp-67 each coordinate Mg(2+). Asp-67 functions as the Proton acceptor in the catalytic mechanism. Substrate-binding positions include Ser-68, 151–154 (FGYD), Lys-174, and 179–180 (HR).

It belongs to the HAM1 NTPase family. Homodimer. Mg(2+) is required as a cofactor.

It catalyses the reaction XTP + H2O = XMP + diphosphate + H(+). The catalysed reaction is dITP + H2O = dIMP + diphosphate + H(+). It carries out the reaction ITP + H2O = IMP + diphosphate + H(+). Pyrophosphatase that catalyzes the hydrolysis of nucleoside triphosphates to their monophosphate derivatives, with a high preference for the non-canonical purine nucleotides XTP (xanthosine triphosphate), dITP (deoxyinosine triphosphate) and ITP. Seems to function as a house-cleaning enzyme that removes non-canonical purine nucleotides from the nucleotide pool, thus preventing their incorporation into DNA/RNA and avoiding chromosomal lesions. This Treponema denticola (strain ATCC 35405 / DSM 14222 / CIP 103919 / JCM 8153 / KCTC 15104) protein is dITP/XTP pyrophosphatase.